Reading from the N-terminus, the 698-residue chain is tRNA (guanine(37)-N(1))-methyltransferase (698 aa).

The interval 233 to 254 (DSTAHDSVQRNEGKTPKGPLDG) is disordered. Residues 234 to 247 (STAHDSVQRNEGKT) are compositionally biased toward basic and acidic residues. S-adenosyl-L-methionine is bound by residues R394, 432-433 (DI), and 459-460 (DA). Disordered stretches follow at residues 500 to 522 (PDQN…GHVD) and 534 to 582 (KKKL…DAPR). Composition is skewed to basic and acidic residues over residues 513-522 (RESDRVGHVD), 539-550 (HADTNDPLEERP), and 569-582 (TNND…DAPR). An S-adenosyl-L-methionine-binding site is contributed by N603.

It belongs to the class I-like SAM-binding methyltransferase superfamily. TRM5/TYW2 family. Monomer.

It is found in the mitochondrion matrix. Its subcellular location is the nucleus. It localises to the cytoplasm. The enzyme catalyses guanosine(37) in tRNA + S-adenosyl-L-methionine = N(1)-methylguanosine(37) in tRNA + S-adenosyl-L-homocysteine + H(+). Functionally, specifically methylates the N1 position of guanosine-37 in various cytoplasmic and mitochondrial tRNAs. Methylation is not dependent on the nature of the nucleoside 5' of the target nucleoside. This is the first step in the biosynthesis of wybutosine (yW), a modified base adjacent to the anticodon of tRNAs and required for accurate decoding. The protein is tRNA (guanine(37)-N(1))-methyltransferase of Plasmodium knowlesi (strain H).